A 122-amino-acid polypeptide reads, in one-letter code: Large ribosomal subunit protein uL14 (122 aa).

Belongs to the universal ribosomal protein uL14 family. Part of the 50S ribosomal subunit. Forms a cluster with proteins L3 and L19. In the 70S ribosome, L14 and L19 interact and together make contacts with the 16S rRNA in bridges B5 and B8.

Binds to 23S rRNA. Forms part of two intersubunit bridges in the 70S ribosome. The sequence is that of Large ribosomal subunit protein uL14 from Moorella thermoacetica (strain ATCC 39073 / JCM 9320).